The following is a 670-amino-acid chain: E3 ubiquitin-protein ligase TRAF7 (670 aa).

2 disordered regions span residues 1–37 and 49–97; these read MSSG…FGPA and GTST…SLHS. Composition is skewed to polar residues over residues 15-31 and 49-67; these read GPSN…TRME and GTST…STLA. 3 positions are modified to phosphoserine: Ser61, Ser88, and Ser91. An RING-type zinc finger spans residues 131 to 165; sequence CQLCCSVFKDPVITTCGHTFCRRCALKSEKCPVDN. Residues 222-276 form a TRAF-type zinc finger; it reads HEGSCDYRPVRCPNNPSCPPLLRMNLEAHLKECEHIKCPHSKYGCTFIGNQDTYE. 7 WD repeats span residues 394-433, 437-474, 477-513, 515-554, 557-594, 597-638, and 641-669; these read GHQG…KCQK, GHDG…KVNT, AHDN…LKLK, ELTG…CIHV, TSGG…QVRT, GHVG…CTQT, and RHQG…KVWT.

Belongs to the WD repeat TRAF7 family. Homodimer. Interacts with MAP3K3 and promotes the kinase activity of this enzyme. Post-translationally, phosphorylated by MAP3K3. In terms of processing, ubiquitinates itself upon phosphorylation. As to expression, ubiquitously expressed with high levels in skeletal muscle, heart, colon, spleen, kidney, liver and placenta.

It localises to the cytoplasmic vesicle. The protein resides in the cytoplasm. It is found in the nucleus. It carries out the reaction S-ubiquitinyl-[E2 ubiquitin-conjugating enzyme]-L-cysteine + [acceptor protein]-L-lysine = [E2 ubiquitin-conjugating enzyme]-L-cysteine + N(6)-ubiquitinyl-[acceptor protein]-L-lysine.. Its pathway is protein modification; protein ubiquitination. E3 ubiquitin and SUMO-protein ligase that plays a role in different biological processes such as innate immunity, inflammation or apoptosis. Potentiates MAP3K3-mediated activation of JUN/AP1 and DDIT3 transcriptional regulators. Negatively regulates MYB transcriptional activity by sequestering it to the cytosol via SUMOylation. Plays a role in the phosphorylation of MAPK1 and/or MAPK3, probably via its interaction with MAP3K3. Negatively regulates RLR-mediated innate immunity by promoting 'Lys-48'-linked ubiquitination of TBK1 through its RING domain to inhibit the cellular antiviral response. Promotes 'Lys-29'-linked polyubiquitination of NEMO/IKBKG and RELA leading to targeting these two proteins to lysosomal degradative pathways, reducing the transcriptional activity of NF-kappa-B. In Homo sapiens (Human), this protein is E3 ubiquitin-protein ligase TRAF7 (TRAF7).